A 596-amino-acid polypeptide reads, in one-letter code: MSHIRNFSIIAHIDHGKSTLADRFIQMCGGLSAREMEAQVLDSMDLERERGITIKAHSVTLHYKAQDGKTYQLNFIDTPGHVDFTYEVSRSLAACEGALLVVDAGQGVEAQSVANCYTAIEQGLEVMPVLNKMDLPQADPDRVKDEIEKIIGIDATDAVACSAKSGMGVDEVLERLVHTIPAPEGEIDAPLQALIIDSWFDNYLGVVSLVRVRHGRVKKGDKILVKSTGKVHLVDSVGVFTPKHTQTADLKAGEVGFIIASIKDIHGAPVGDTLTLSSTPEVEVLAGFKKIQPQVYAGLFPVSSDDFEDFRDALQKLTLNDSSLQYMPESSDALGFGFRCGFLGMLHMEIIQERLEREYDLDLITTAPSVIYELELKTGETIVVDNPSKLPDVSSVTDFREPIVTATILVPQEHLGNVITLCIEKRGVQRDMQFLGSQVQVRYDMPMNEVVLDFFDRLKSTSRGYASLDYHFDRYQSANLVKLDVLINGDKVDALALIVHRDNAAYKGRALTEKMKELIPRQMFDVAIQAAIGGQIIARTTVKALRKNVLAKCYGGDVSRKKKLLEKQKAGKKRMKQVGNVEIPQEAFLAVLRLDS.

A tr-type G domain is found at 2–184; it reads SHIRNFSIIA…RLVHTIPAPE (183 aa). Residues 14-19 and 131-134 each bind GTP; these read DHGKST and NKMD.

This sequence belongs to the TRAFAC class translation factor GTPase superfamily. Classic translation factor GTPase family. LepA subfamily.

Its subcellular location is the cell inner membrane. The enzyme catalyses GTP + H2O = GDP + phosphate + H(+). In terms of biological role, required for accurate and efficient protein synthesis under certain stress conditions. May act as a fidelity factor of the translation reaction, by catalyzing a one-codon backward translocation of tRNAs on improperly translocated ribosomes. Back-translocation proceeds from a post-translocation (POST) complex to a pre-translocation (PRE) complex, thus giving elongation factor G a second chance to translocate the tRNAs correctly. Binds to ribosomes in a GTP-dependent manner. This is Elongation factor 4 from Pseudomonas putida (strain GB-1).